The sequence spans 231 residues: 26S proteasome non-ATPase regulatory subunit 10 (231 aa).

ANK repeat units follow at residues Gly-3 to Thr-36, Asp-37 to Lys-69, Asp-70 to Val-102, Asn-103 to Lys-135, Asn-136 to Gln-168, Asp-169 to Glu-201, and Asn-202 to Ser-226.

As to quaternary structure, part of transient complex containing PSMD10, PSMC4, PSMC5 and PAAF1 formed during the assembly of the 26S proteasome. Stays associated throughout the assembly of the PA700/19S RC and is released upon association with the 20S core. Interacts with PSMC4. Interacts with RB1. Interacts with CDK4. Interacts with MDM2. Interacts with RELA. Associates with a CDK4:CCND2 serine/threonine kinase complex. Interacts with ARHGDIA and increases the interaction between ARHGDIA and RHOA, hence promotes ARHGDIA inactivation of RHOA and ROCK.

The protein localises to the cytoplasm. It is found in the nucleus. Functionally, acts as a chaperone during the assembly of the 26S proteasome, specifically of the PA700/19S regulatory complex (RC). In the initial step of the base subcomplex assembly is part of an intermediate PSMD10:PSMC4:PSMC5:PAAF1 module which probably assembles with a PSMD5:PSMC2:PSMC1:PSMD2 module. Independently of the proteasome, regulates EGF-induced AKT activation through inhibition of the RHOA/ROCK/PTEN pathway, leading to prolonged AKT activation. Plays an important role in RAS-induced tumorigenesis. Its function is as follows. Acts as an oncoprotein by being involved in negative regulation of tumor suppressors RB1 and p53/TP53. Overexpression is leading to phosphorylation of RB1 and proteasomal degradation of RB1. Regulates CDK4-mediated phosphorylation of RB1 by competing with CDKN2A for binding with CDK4. Facilitates binding of MDM2 to p53/TP53 and the mono- and polyubiquitination of p53/TP53 by MDM2 suggesting a function in targeting the TP53:MDM2 complex to the 26S proteasome. Involved in p53-independent apoptosis. Involved in regulation of NF-kappa-B by retaining it in the cytoplasm. Binds to the NF-kappa-B component RELA and accelerates its XPO1/CRM1-mediated nuclear export. The polypeptide is 26S proteasome non-ATPase regulatory subunit 10 (Psmd10) (Rattus norvegicus (Rat)).